The chain runs to 285 residues: V-set and transmembrane domain-containing protein 2B (285 aa).

The N-terminal stretch at 1 to 28 is a signal peptide; the sequence is MEQRNRLGALGYLLPLLLHSLLLFVADA. The Ig-like V-type domain maps to 29-143; the sequence is TFTEVPKDVT…DDDTQEHKAQ (115 aa). Residues 29–263 are Extracellular-facing; that stretch reads TFTEVPKDVT…HGSGTGPGYS (235 aa). An intrachain disulfide couples Cys49 to Cys127. Residues 160 to 225 form a disordered region; that stretch reads AEAVSHIQSS…AAAAAASATH (66 aa). Composition is skewed to low complexity over residues 176–189 and 208–225; these read ASSAVSSNNAGAAV and PAGSGVPEAAAAAASATH. Residues 264 to 284 traverse the membrane as a helical segment; the sequence is ADPLLSLLLLALHKFLHPLLG. His285 is a topological domain (cytoplasmic).

It localises to the membrane. This Mus musculus (Mouse) protein is V-set and transmembrane domain-containing protein 2B (Vstm2b).